The primary structure comprises 407 residues: uncharacterized protein (407 aa).

Residue K22 forms a Glycyl lysine isopeptide (Lys-Gly) (interchain with G-Cter in ubiquitin) linkage.

Belongs to the SVF1 family.

It localises to the cytoplasm. This is an uncharacterized protein from Saccharomyces cerevisiae (strain ATCC 204508 / S288c) (Baker's yeast).